A 176-amino-acid polypeptide reads, in one-letter code: Ribosome rescue factor SmrB (176 aa).

The Smr domain maps to 98–173 (LDLHGLTQKQ…GTAALLVLVE (76 aa)).

Belongs to the SmrB family. Associates with collided ribosomes, but not with correctly translating polysomes.

Functionally, acts as a ribosome collision sensor. Detects stalled/collided disomes (pairs of ribosomes where the leading ribosome is stalled and a second ribosome has collided with it) and endonucleolytically cleaves mRNA at the 5' boundary of the stalled ribosome. Stalled/collided disomes form a new interface (primarily via the 30S subunits) that binds SmrB. Cleaved mRNA becomes available for tmRNA ligation, leading to ribosomal subunit dissociation and rescue of stalled ribosomes. The protein is Ribosome rescue factor SmrB of Yersinia enterocolitica serotype O:8 / biotype 1B (strain NCTC 13174 / 8081).